The sequence spans 440 residues: Xaa-Pro dipeptidase (440 aa).

5 residues coordinate Mn(2+): D244, D255, H335, E380, and E419.

It belongs to the peptidase M24B family. Bacterial-type prolidase subfamily. Requires Mn(2+) as cofactor.

The catalysed reaction is Xaa-L-Pro dipeptide + H2O = an L-alpha-amino acid + L-proline. Its function is as follows. Splits dipeptides with a prolyl residue in the C-terminal position. The protein is Xaa-Pro dipeptidase of Shewanella denitrificans (strain OS217 / ATCC BAA-1090 / DSM 15013).